Consider the following 575-residue polypeptide: V-type ATP synthase alpha chain (575 aa).

Gly238–Thr245 serves as a coordination point for ATP.

It belongs to the ATPase alpha/beta chains family.

It carries out the reaction ATP + H2O + 4 H(+)(in) = ADP + phosphate + 5 H(+)(out). Its function is as follows. Produces ATP from ADP in the presence of a proton gradient across the membrane. The V-type alpha chain is a catalytic subunit. This chain is V-type ATP synthase alpha chain, found in Borrelia garinii subsp. bavariensis (strain ATCC BAA-2496 / DSM 23469 / PBi) (Borreliella bavariensis).